Reading from the N-terminus, the 429-residue chain is MKKQNNLRSLAAQAVEQVVEQGQSLSNVLPPLQQKVADKDKALLQELCFGVLRTLSQLEWLINKLMSRPMTGKQRTVHYLIMVGFYQLLYTRVPPHAALAETVEGAVSIKRPQLKGLINGVLRQFQRQQETLLNEFATSDARFLHPGWLVKRLQNAYPTQWQRIIEANNQRPPMWLRVNRTHHTRDGWLGLLEDAGMKGYPHPDYPDAVRLETPAPVHALPGFAEGWVTVQDASAQGCAVFLAPQNGEHILDLCSAPGGKTTHILEVAPEADVLAVDIDEQRLSRVYDNLKRLGMKATVKQGDGRYPAQWCGEQQFDRILLDAPCSATGVIRRHPDIKWLRRDRDIVELAQLQAEILDAVWPRLKPGGTLVYATCSVLPEENRDQIKTFLQRTPDAALSETGTPDQPGQQNLPGGEEGDGFFYAKLIKK.

S-adenosyl-L-methionine is bound by residues 254–260 (CSAPGGK), Asp-277, Asp-303, and Asp-322. Cys-375 functions as the Nucleophile in the catalytic mechanism. Residues 397 to 419 (ALSETGTPDQPGQQNLPGGEEGD) form a disordered region. Residues 400–412 (ETGTPDQPGQQNL) are compositionally biased toward polar residues.

Belongs to the class I-like SAM-binding methyltransferase superfamily. RsmB/NOP family.

Its subcellular location is the cytoplasm. The catalysed reaction is cytidine(967) in 16S rRNA + S-adenosyl-L-methionine = 5-methylcytidine(967) in 16S rRNA + S-adenosyl-L-homocysteine + H(+). Its function is as follows. Specifically methylates the cytosine at position 967 (m5C967) of 16S rRNA. The chain is Ribosomal RNA small subunit methyltransferase B from Salmonella dublin (strain CT_02021853).